The following is a 1491-amino-acid chain: Terminal uridylyltransferase 7 (1491 aa).

Thr64 bears the Phosphothreonine mark. 2 positions are modified to phosphoserine: Ser132 and Ser172. Residues 165 to 203 (MSEMEAGSPENKKQRSRPRKPRRTRTEDSEQDGDLDGPV) are disordered. Basic residues predominate over residues 178 to 187 (QRSRPRKPRR). Residues 244–274 (YTCKLCDALIDSIPFAHKHIKEKRHKKNLKE) form a Matrin-type zinc finger. A PAP-associated 1 domain is found at 551–600 (VGQLWVELLRFYALEFNLADLVISIRVKELISRESKDWPKKRIAIEDPYS). Ser600 and Ser747 each carry phosphoserine. Disordered stretches follow at residues 740–774 (AELPETGSDNEEVRRKTKHPLSTDDQGLSSSKHPE) and 834–911 (QSRT…CGEN). Positions 844-857 (DDEEEEEEEEEEEE) are enriched in acidic residues. Residue Thr865 is modified to Phosphothreonine. Acidic residues predominate over residues 885–897 (GEEDALSEEDDLA). At Ser891 the chain carries Phosphoserine. Residues 947 to 1491 (RKLTFTKGKS…ASVKRTQQES (545 aa)) are sufficient for monouridylation activity. Residues 959–976 (VVCSLCKREGHLKKDCPE) form a CCHC-type 1 zinc finger. Residues 1043-1046 (SSKN), 1053-1056 (SDLD), Asn1126, Lys1148, 1166-1170 (SYAYT), and His1282 each bind UTP. Residues Asp1054 and Asp1056 each coordinate Mg(2+). Residues 1230-1282 (VGQLWLGLLRFYTEEFDFKEHVISIRRKSLLTTFKKQWTSKYIVIEDPFDLNH) enclose the PAP-associated 2 domain. The CCHC-type 2 zinc finger occupies 1341 to 1358 (RCCRICGKIGHFMKDCPM). 2 disordered regions span residues 1362-1399 (VRRRRDQEDTPNQRYSESKEKRSKEDKEIQNKYTEKEV) and 1463-1491 (PQFKGSPGSLSSKYMTQGRASVKRTQQES). Basic and acidic residues predominate over residues 1377–1399 (SESKEKRSKEDKEIQNKYTEKEV). The CCHC-type 3 zinc-finger motif lies at 1447-1464 (KRCFICGREGHIKKECPQ). A compositionally biased stretch (polar residues) spans 1470-1481 (GSLSSKYMTQGR).

This sequence belongs to the DNA polymerase type-B-like family. The cofactor is Mg(2+). Mn(2+) serves as cofactor.

The protein resides in the cytoplasm. It carries out the reaction RNA(n) + UTP = RNA(n)-3'-uridine ribonucleotide + diphosphate. Its function is as follows. Uridylyltransferase that mediates the terminal uridylation of mRNAs with short (less than 25 nucleotides) poly(A) tails, hence facilitating global mRNA decay. Essential for both oocyte maturation and fertility. Through 3' terminal uridylation of mRNA, sculpts, with TUT7, the maternal transcriptome by eliminating transcripts during oocyte growth. Involved in microRNA (miRNA)-induced gene silencing through uridylation of deadenylated miRNA targets. Also acts as a suppressor of miRNA biogenesis by mediating the terminal uridylation of miRNA precursors, including that of let-7 (pre-let-7). Uridylated pre-let-7 RNA is not processed by Dicer and undergo degradation. Pre-let-7 uridylation is strongly enhanced in the presence of LIN28A. Due to functional redundancy between ZCCHC6 and ZCCHC11, the identification of the specific role of each of these proteins is difficult. Involved in microRNA (miRNA)-induced gene silencing through uridylation of deadenylated miRNA targets. Also functions as an integral regulator of microRNA biogenesiS using 3 different uridylation mechanisms. Acts as a suppressor of miRNA biogenesis by mediating the terminal uridylation of some miRNA precursors, including that of let-7 (pre-let-7). Uridylated pre-let-7 RNA is not processed by Dicer and undergo degradation. Pre-let-7 oligouridylation is strongly enhanced in the presence of LIN28A. In the absence of LIN28A, TUT7 and TUT4 monouridylate group II pre-miRNAs, which includes most of pre-let7 members, that shapes an optimal 3' end overhang for efficient processing. Add oligo-U tails to truncated pre-miRNAS with a 5' overhang which may promote rapid degradation of non-functional pre-miRNA species. Does not play a role in replication-dependent histone mRNA degradation. Due to functional redundancy between TUT4 and TUT7, the identification of the specific role of each of these proteins is difficult. TUT4 and TUT7 restrict retrotransposition of long interspersed element-1 (LINE-1) in cooperation with MOV10 counteracting the RNA chaperonne activity of L1RE1. TUT7 uridylates LINE-1 mRNAs in the cytoplasm which inhibits initiation of reverse transcription once in the nucleus, whereas uridylation by TUT4 destabilizes mRNAs in cytoplasmic ribonucleoprotein granules. The polypeptide is Terminal uridylyltransferase 7 (Mus musculus (Mouse)).